The primary structure comprises 591 residues: BRCA1-associated protein (591 aa).

Serine 52 bears the Phosphoserine mark. Basic and acidic residues predominate over residues 82–93 (DEVRDTVEEKKP). Positions 82 to 124 (DEVRDTVEEKKPSAAPVSAQRSREQSESVNTAPESPSKQLPDQ) are disordered. A compositionally biased stretch (polar residues) spans 108–124 (ESVNTAPESPSKQLPDQ). A phosphoserine mark is found at serine 116 and serine 118. The segment at 263–303 (CTVCLERMDESVNGILTTLCNHSFHSQCLQRWDDTTCPVCR) adopts an RING-type zinc-finger fold. The UBP-type; degenerate zinc finger occupies 300–392 (PVCRYCQTPE…GKIVQYECEG (93 aa)). The Zn(2+) site is built by cysteine 316, cysteine 319, cysteine 328, cysteine 331, cysteine 336, histidine 343, histidine 347, and histidine 353. Positions 430–536 (EKDTAEEINN…EIQEQLRDVM (107 aa)) form a coiled coil. The tract at residues 563-591 (IAMASAPNPPSSGAGGKLQSRKGRSKRGK) is disordered. A compositionally biased stretch (basic residues) spans 581–591 (QSRKGRSKRGK).

In terms of assembly, interacts with the nuclear localization signal of BRCA1 and with the N-terminal of KSR1. The C-terminal portion of BRCA1 interacts with DDB1. As to expression, isoform 2 is highly expressed in testis, lower levels in brain, heart, lung, stomach, colon, uterus, liver and kidney. Isoform 1 is only expressed in the testis. Isoform 2 is predominant over isoform 1 in both fetal and adult testis.

The protein localises to the cytoplasm. The enzyme catalyses S-ubiquitinyl-[E2 ubiquitin-conjugating enzyme]-L-cysteine + [acceptor protein]-L-lysine = [E2 ubiquitin-conjugating enzyme]-L-cysteine + N(6)-ubiquitinyl-[acceptor protein]-L-lysine.. Its pathway is protein modification; protein ubiquitination. Negatively regulates MAP kinase activation by limiting the formation of Raf/MEK complexes probably by inactivation of the KSR1 scaffold protein. Also acts as a Ras responsive E3 ubiquitin ligase that, on activation of Ras, is modified by auto-polyubiquitination resulting in the release of inhibition of Raf/MEK complex formation. May also act as a cytoplasmic retention protein with a role in regulating nuclear transport. This is BRCA1-associated protein from Mus musculus (Mouse).